The following is a 266-amino-acid chain: Glucosamine-6-phosphate deaminase (266 aa).

Residue Asp-72 is the Proton acceptor; for enolization step of the active site. Catalysis depends on Asp-141, which acts as the For ring-opening step. His-143 functions as the Proton acceptor; for ring-opening step in the catalytic mechanism. Residue Glu-148 is the For ring-opening step of the active site.

This sequence belongs to the glucosamine/galactosamine-6-phosphate isomerase family. NagB subfamily. Homohexamer.

It carries out the reaction alpha-D-glucosamine 6-phosphate + H2O = beta-D-fructose 6-phosphate + NH4(+). It participates in amino-sugar metabolism; N-acetylneuraminate degradation; D-fructose 6-phosphate from N-acetylneuraminate: step 5/5. Its activity is regulated as follows. Allosterically activated by N-acetylglucosamine 6-phosphate (GlcNAc6P). In terms of biological role, catalyzes the reversible isomerization-deamination of glucosamine 6-phosphate (GlcN6P) to form fructose 6-phosphate (Fru6P) and ammonium ion. This Aliivibrio salmonicida (strain LFI1238) (Vibrio salmonicida (strain LFI1238)) protein is Glucosamine-6-phosphate deaminase.